Reading from the N-terminus, the 333-residue chain is Cytosolic sulfotransferase 10 (333 aa).

3'-phosphoadenylyl sulfate is bound at residue 76–81; the sequence is KSGTTW. Histidine 146 acts as the Proton acceptor in catalysis. Residues arginine 168, serine 176, tyrosine 234, and 299 to 301 contribute to the 3'-phosphoadenylyl sulfate site; that span reads RKG.

It belongs to the sulfotransferase 1 family. As to expression, expressed in roots.

It localises to the cytoplasm. Its function is as follows. Sulfotransferase that utilizes 3'-phospho-5'-adenylyl sulfate (PAPS) as sulfonate donor to specifically catalyze the sulfate conjugation of brassinosteroids, including castasterone (CS), brassinolide (BL), related 24-epimers, and the naturally occurring (22R, 23R)-28-homobrassinosteroids. No activity on phenolic acids, desulfo-glucosinolates, flavonoids, steroids, gibberellic acids, cytokinins, phenylpropanoids, hydroxyjasmonates and coumarins. This is Cytosolic sulfotransferase 10 (SOT10) from Arabidopsis thaliana (Mouse-ear cress).